The primary structure comprises 449 residues: CCA-adding enzyme (449 aa).

Positions 53 and 56 each coordinate ATP. CTP-binding residues include S53 and K56. 3 residues coordinate Mg(2+): D65, D67, and D119. H142, K161, and Y170 together coordinate ATP. Residues H142, K161, and Y170 each coordinate CTP.

Belongs to the tRNA nucleotidyltransferase/poly(A) polymerase family. Archaeal CCA-adding enzyme subfamily. As to quaternary structure, homodimer. Mg(2+) serves as cofactor.

It carries out the reaction a tRNA precursor + 2 CTP + ATP = a tRNA with a 3' CCA end + 3 diphosphate. The catalysed reaction is a tRNA with a 3' CCA end + 2 CTP + ATP = a tRNA with a 3' CCACCA end + 3 diphosphate. Catalyzes the addition and repair of the essential 3'-terminal CCA sequence in tRNAs without using a nucleic acid template. Adds these three nucleotides in the order of C, C, and A to the tRNA nucleotide-73, using CTP and ATP as substrates and producing inorganic pyrophosphate. tRNA 3'-terminal CCA addition is required both for tRNA processing and repair. Also involved in tRNA surveillance by mediating tandem CCA addition to generate a CCACCA at the 3' terminus of unstable tRNAs. While stable tRNAs receive only 3'-terminal CCA, unstable tRNAs are marked with CCACCA and rapidly degraded. This Pyrococcus horikoshii (strain ATCC 700860 / DSM 12428 / JCM 9974 / NBRC 100139 / OT-3) protein is CCA-adding enzyme.